We begin with the raw amino-acid sequence, 529 residues long: Bifunctional purine biosynthesis protein PurH (529 aa).

The 148-residue stretch at 1–148 (MTNRNVIKNV…KNYKNVLVVT (148 aa)) folds into the MGS-like domain.

Belongs to the PurH family.

It catalyses the reaction (6R)-10-formyltetrahydrofolate + 5-amino-1-(5-phospho-beta-D-ribosyl)imidazole-4-carboxamide = 5-formamido-1-(5-phospho-D-ribosyl)imidazole-4-carboxamide + (6S)-5,6,7,8-tetrahydrofolate. It carries out the reaction IMP + H2O = 5-formamido-1-(5-phospho-D-ribosyl)imidazole-4-carboxamide. The protein operates within purine metabolism; IMP biosynthesis via de novo pathway; 5-formamido-1-(5-phospho-D-ribosyl)imidazole-4-carboxamide from 5-amino-1-(5-phospho-D-ribosyl)imidazole-4-carboxamide (10-formyl THF route): step 1/1. It participates in purine metabolism; IMP biosynthesis via de novo pathway; IMP from 5-formamido-1-(5-phospho-D-ribosyl)imidazole-4-carboxamide: step 1/1. The polypeptide is Bifunctional purine biosynthesis protein PurH (Buchnera aphidicola subsp. Baizongia pistaciae (strain Bp)).